Reading from the N-terminus, the 510-residue chain is Probable cytochrome P450 4aa1 (510 aa).

Cys-450 contacts heme.

It belongs to the cytochrome P450 family. Heme serves as cofactor.

Its subcellular location is the endoplasmic reticulum membrane. It localises to the microsome membrane. Functionally, may be involved in the metabolism of insect hormones and in the breakdown of synthetic insecticides. This chain is Probable cytochrome P450 4aa1 (Cyp4aa1), found in Drosophila melanogaster (Fruit fly).